A 92-amino-acid chain; its full sequence is Probable Fe(2+)-trafficking protein (92 aa).

The protein belongs to the Fe(2+)-trafficking protein family.

Functionally, could be a mediator in iron transactions between iron acquisition and iron-requiring processes, such as synthesis and/or repair of Fe-S clusters in biosynthetic enzymes. In Shewanella halifaxensis (strain HAW-EB4), this protein is Probable Fe(2+)-trafficking protein.